The primary structure comprises 450 residues: Protein tweety homolog 1 (450 aa).

The Extracellular segment spans residues 1-43 (MGAPPGYRPSAWVHLLHQLPRADFQLRPVPSGFAPRDQEYQQA). Residues 44 to 64 (LLLVAALAGLGLGLSLIFIAV) traverse the membrane as a helical segment. Over 65–88 (YLIRFCCCRPPEPHGAKSPPPGGG) the chain is Cytoplasmic. Residues 89 to 109 (CVTWSCIAALLVGCAGIGIGF) form a helical membrane-spanning segment. Topologically, residues 110 to 214 (YGNSETSDGV…DVTFVEEYRW (105 aa)) are extracellular. N-linked (GlcNAc...) asparagine glycosylation is present at asparagine 130. The chain crosses the membrane as a helical span at residues 215–235 (LAYVLLLLLVLLVCLFTLLGL). Residues 236–240 (AKQSK) lie on the Cytoplasmic side of the membrane. Residues 241-261 (WLVVVMTAMSLLVLVLSWGSM) traverse the membrane as a helical segment. At 262–390 (GLEAATAVGL…LRGLCEDALE (129 aa)) the chain is on the extracellular side. Intrachain disulfides connect cysteine 275-cysteine 385 and cysteine 303-cysteine 370. N-linked (GlcNAc...) asparagine glycans are attached at residues asparagine 284 and asparagine 355. Residues 391-411 (GLLFLMLFSLLSAGALATTLC) form a helical membrane-spanning segment. The Cytoplasmic segment spans residues 412–450 (SLPRAWALFPPSDDYDDTDDDDPFNPQESKRFVQWQSSI). The tract at residues 428 to 450 (DTDDDDPFNPQESKRFVQWQSSI) is disordered. Serine 440 bears the Phosphoserine mark.

This sequence belongs to the tweety family. As to quaternary structure, homotetramer; disulfide-linked. Homodimer. Post-translationally, N-glycosylated. Contains high-mannose, hybrid and complex oligosaccharides. In terms of tissue distribution, expressed in the astrocytes (at protein level). Restricted mainly to neural tissues. Strongly expressed in brain and eye.

The protein resides in the cell membrane. The catalysed reaction is chloride(in) = chloride(out). It carries out the reaction L-glutamate(out) = L-glutamate(in). Inhibited by (4-[(2-butyl-6,7-dichloro-2- cyclopentyl-2,3-dihydro-1-oxo-1H-inden-5-yl)oxy]butanoic acid). Calcium-independent, swelling-dependent volume-regulated anion channel (VRAC-swell) which plays a pivotal role in the process of regulatory volume decrease (RVD) in the brain through the efflux of anions like chloride and organic osmolytes like glutamate. The sequence is that of Protein tweety homolog 1 (Ttyh1) from Mus musculus (Mouse).